The chain runs to 129 residues: MLTPLQIYFPIGVVLLVAVVLAFTMLGLANVLGPRRPSLVKQTPFECGSEPVGSARERFGVKFYVVALLFIVFDIEAIFLYPWAVLLLPDGQGYPGLGWPGFVSMGIFVFTLVAGLVYVWKKGVLDWAD.

The next 3 helical transmembrane spans lie at 9–29 (FPIGVVLLVAVVLAFTMLGLA), 68–88 (LLFIVFDIEAIFLYPWAVLLL), and 97–117 (LGWPGFVSMGIFVFTLVAGLV).

Belongs to the complex I subunit 3 family. NDH-1 is composed of 14 different subunits. Subunits NuoA, H, J, K, L, M, N constitute the membrane sector of the complex.

The protein resides in the cell inner membrane. It catalyses the reaction a quinone + NADH + 5 H(+)(in) = a quinol + NAD(+) + 4 H(+)(out). Functionally, NDH-1 shuttles electrons from NADH, via FMN and iron-sulfur (Fe-S) centers, to quinones in the respiratory chain. The immediate electron acceptor for the enzyme in this species is believed to be ubiquinone. Couples the redox reaction to proton translocation (for every two electrons transferred, four hydrogen ions are translocated across the cytoplasmic membrane), and thus conserves the redox energy in a proton gradient. This chain is NADH-quinone oxidoreductase subunit A, found in Anaeromyxobacter sp. (strain K).